Reading from the N-terminus, the 1357-residue chain is Regulator of V-ATPase in vacuolar membrane protein 1 (1357 aa).

8 WD repeats span residues histidine 98–glutamine 134, lysine 142–alanine 182, proline 190–threonine 239, glycine 384–serine 423, glutamine 431–serine 470, isoleucine 595–glutamate 636, threonine 638–asparagine 679, and glutamine 898–tyrosine 939. Residues glycine 1243–valine 1357 are disordered. 2 positions are modified to phosphoserine: serine 1244 and serine 1248. Positions serine 1272–serine 1288 are enriched in low complexity. The segment covering serine 1320–leucine 1332 has biased composition (basic and acidic residues).

In terms of assembly, component of the RAVE complex composed of RAV1, RAV2 and CBF3D/SKP1. Within the complex, it interacts directly with RAV2 and CBF3D. Interacts with the V-ATPase V1 subunits VMA1, VMA2 and VMA8.

It is found in the endomembrane system. Its function is as follows. Component of the RAVE complex, which is required for stable assembly of the vacuolar ATPase complex V-ATPase under many conditions. Required for transport between the early endosome and the late endosome/prevacuolar compartment (PVC), suggesting that assembly of vacuolar ATPase at the early endosome is required for transport from the early endosome to the PVC. The chain is Regulator of V-ATPase in vacuolar membrane protein 1 (RAV1) from Saccharomyces cerevisiae (strain ATCC 204508 / S288c) (Baker's yeast).